Consider the following 528-residue polypeptide: Protein MGF 505-7R (528 aa).

ANK repeat units follow at residues 54–83, 129–158, 261–290, 292–321, and 322–352; these read SIND…NLHY, GCDL…LLNV, SVKR…IPRG, IERL…YKVK, and NVKK…LLDA.

It belongs to the asfivirus MGF 505 family. Interacts with host STING1. Interacts with host JAK1; this interaction leads to JAK1 degradation. Interacts with host JAK2; this interaction leads to JAK2 degradation. Interacts with host RELA; this interaction inhibits NF-kappa-B promoter activity.

It localises to the host cytoplasm. Its function is as follows. Plays a role in virus cell tropism, and may be required for efficient virus replication in macrophages. Interferes with host NF-kappa-B promoter activity mediated by TLR8. Mechanistically, inhibits the phosphorylation and subsequent nuclear translocation of host NF-kappa-B RELA subunit downstream of TLR8. Promotes the expression of the autophagy-related protein host ULK1 to degrade host STING and inhibit the interferon response. Inhibits also JAK1- and JAK2-mediated signaling and thus negatively regulates the IFN-gamma signaling. This African swine fever virus (strain Badajoz 1971 Vero-adapted) (Ba71V) protein is Protein MGF 505-7R.